We begin with the raw amino-acid sequence, 217 residues long: Small ribosomal subunit protein uS3 (217 aa).

Positions 38-106 (IRKFLKKRLS…KVTLDIQEVR (69 aa)) constitute a KH type-2 domain.

It belongs to the universal ribosomal protein uS3 family. In terms of assembly, part of the 30S ribosomal subunit. Forms a tight complex with proteins S10 and S14.

In terms of biological role, binds the lower part of the 30S subunit head. Binds mRNA in the 70S ribosome, positioning it for translation. The sequence is that of Small ribosomal subunit protein uS3 from Desulfotalea psychrophila (strain LSv54 / DSM 12343).